The primary structure comprises 147 residues: Large ribosomal subunit protein uL13 (147 aa).

This sequence belongs to the universal ribosomal protein uL13 family. Part of the 50S ribosomal subunit.

Functionally, this protein is one of the early assembly proteins of the 50S ribosomal subunit, although it is not seen to bind rRNA by itself. It is important during the early stages of 50S assembly. The protein is Large ribosomal subunit protein uL13 of Paenarthrobacter aurescens (strain TC1).